The sequence spans 509 residues: ATP synthase subunit alpha (509 aa).

169-176 serves as a coordination point for ATP; it reads GDRQTGKT.

Belongs to the ATPase alpha/beta chains family. As to quaternary structure, F-type ATPases have 2 components, CF(1) - the catalytic core - and CF(0) - the membrane proton channel. CF(1) has five subunits: alpha(3), beta(3), gamma(1), delta(1), epsilon(1). CF(0) has three main subunits: a(1), b(2) and c(9-12). The alpha and beta chains form an alternating ring which encloses part of the gamma chain. CF(1) is attached to CF(0) by a central stalk formed by the gamma and epsilon chains, while a peripheral stalk is formed by the delta and b chains.

The protein localises to the cell inner membrane. It carries out the reaction ATP + H2O + 4 H(+)(in) = ADP + phosphate + 5 H(+)(out). Functionally, produces ATP from ADP in the presence of a proton gradient across the membrane. The alpha chain is a regulatory subunit. In Methylorubrum populi (strain ATCC BAA-705 / NCIMB 13946 / BJ001) (Methylobacterium populi), this protein is ATP synthase subunit alpha.